The following is a 207-amino-acid chain: Outer-membrane lipoprotein LolB (207 aa).

Positions 1–21 (MPLPDFRLIRLLPLAALVLTA) are cleaved as a signal peptide. C22 carries the N-palmitoyl cysteine lipid modification. C22 carries S-diacylglycerol cysteine lipidation.

Belongs to the LolB family. As to quaternary structure, monomer.

It localises to the cell outer membrane. Its function is as follows. Plays a critical role in the incorporation of lipoproteins in the outer membrane after they are released by the LolA protein. The sequence is that of Outer-membrane lipoprotein LolB from Escherichia coli (strain K12 / MC4100 / BW2952).